The sequence spans 272 residues: Homeobox protein Hox-D12 (272 aa).

The segment at residues 204-263 is a DNA-binding region (homeobox); the sequence is SRRKRKPYTKQQIAELENEFLANEFINRQKRKELSDRLNLSDQQVKIWFQNRRMKKKRLV.

This sequence belongs to the Abd-B homeobox family.

The protein resides in the nucleus. Its function is as follows. Sequence-specific transcription factor which is part of a developmental regulatory system that provides cells with specific positional identities on the anterior-posterior axis. In Heterodontus francisci (Horn shark), this protein is Homeobox protein Hox-D12 (HOXD12).